The primary structure comprises 350 residues: uncharacterized protein (350 aa).

Positions 1 to 27 are cleaved as a signal peptide; the sequence is MKNKKRVLIASSLSCAILLLSAATTQA. Positions 28-71 are disordered; sequence NSAHKDSQDQNKKEHVDKSQQKEKRNVTNKDKNSTVPDDIGKNG. The segment covering 30-60 has biased composition (basic and acidic residues); it reads AHKDSQDQNKKEHVDKSQQKEKRNVTNKDKN.

It belongs to the aerolysin family.

This is an uncharacterized protein from Staphylococcus aureus (strain MSSA476).